The following is a 266-amino-acid chain: 4-hydroxy-tetrahydrodipicolinate reductase (266 aa).

Residue 10 to 15 participates in NAD(+) binding; it reads GPRGRM. Lysine 38 is an NADP(+) binding site. Residues 99 to 101 and 125 to 128 contribute to the NAD(+) site; these read GTT and APNF. Histidine 155 functions as the Proton donor/acceptor in the catalytic mechanism. Histidine 156 contributes to the (S)-2,3,4,5-tetrahydrodipicolinate binding site. The Proton donor role is filled by lysine 159. 165-166 is a binding site for (S)-2,3,4,5-tetrahydrodipicolinate; that stretch reads GT.

The protein belongs to the DapB family.

Its subcellular location is the cytoplasm. The enzyme catalyses (S)-2,3,4,5-tetrahydrodipicolinate + NAD(+) + H2O = (2S,4S)-4-hydroxy-2,3,4,5-tetrahydrodipicolinate + NADH + H(+). It catalyses the reaction (S)-2,3,4,5-tetrahydrodipicolinate + NADP(+) + H2O = (2S,4S)-4-hydroxy-2,3,4,5-tetrahydrodipicolinate + NADPH + H(+). The protein operates within amino-acid biosynthesis; L-lysine biosynthesis via DAP pathway; (S)-tetrahydrodipicolinate from L-aspartate: step 4/4. Catalyzes the conversion of 4-hydroxy-tetrahydrodipicolinate (HTPA) to tetrahydrodipicolinate. The sequence is that of 4-hydroxy-tetrahydrodipicolinate reductase from Bacillus anthracis (strain A0248).